The primary structure comprises 20 residues: Mu-conotoxin SIIIB (20 aa).

Gln1 carries the pyrrolidone carboxylic acid modification. Cystine bridges form between Cys3–Cys13, Cys4–Cys19, and Cys8–Cys20. Cysteine amide is present on Cys20.

As to expression, expressed by the venom duct.

It is found in the secreted. Mu-conotoxins block voltage-gated sodium channels (VGSC). Potently displaces (125)I-TIIIA from native rat brain Nav1.2/SCN2A (IC(50) is 5 nM) and muscle Nav1.4/SCN4A (IC(50) is 3 nM) VGSCs. Potently and irreversibly inhibits current through Xenopus oocyte-expressed Nav1.2/SCN2A and Nav1.4/SCN4A. The protein is Mu-conotoxin SIIIB of Conus striatus (Striated cone).